Consider the following 436-residue polypeptide: UPF0597 protein YhaM (436 aa).

This sequence belongs to the UPF0597 family.

This is UPF0597 protein YhaM from Escherichia coli O45:K1 (strain S88 / ExPEC).